We begin with the raw amino-acid sequence, 397 residues long: Xylose isomerase (397 aa).

Catalysis depends on residues histidine 54 and aspartate 57. Positions 181, 217, 220, 245, 255, 257, and 293 each coordinate Mg(2+).

Belongs to the xylose isomerase family. Homotetramer. It depends on Mg(2+) as a cofactor.

The protein resides in the cytoplasm. It carries out the reaction alpha-D-xylose = alpha-D-xylulofuranose. The protein is Xylose isomerase of Clavibacter sepedonicus (Clavibacter michiganensis subsp. sepedonicus).